The chain runs to 318 residues: uncharacterized protein (318 aa).

This is an uncharacterized protein from Autographa californica nuclear polyhedrosis virus (AcMNPV).